We begin with the raw amino-acid sequence, 78 residues long: Large ribosomal subunit protein bL28 (78 aa).

The interval 1–25 is disordered; that stretch reads MSRVCQVTGKRPAVGNNRSHAKNAT.

The protein belongs to the bacterial ribosomal protein bL28 family.

In Aliivibrio fischeri (strain ATCC 700601 / ES114) (Vibrio fischeri), this protein is Large ribosomal subunit protein bL28.